Consider the following 186-residue polypeptide: Alkyl hydroperoxide reductase AhpD (186 aa).

The Proton donor role is filled by cysteine 132. A disulfide bridge connects residues cysteine 132 and cysteine 135. The active-site Cysteine sulfenic acid (-SOH) intermediate is cysteine 135.

Belongs to the AhpD family.

It catalyses the reaction N(6)-[(R)-dihydrolipoyl]-L-lysyl-[lipoyl-carrier protein] + a hydroperoxide = N(6)-[(R)-lipoyl]-L-lysyl-[lipoyl-carrier protein] + an alcohol + H2O. Its function is as follows. Antioxidant protein with alkyl hydroperoxidase activity. Required for the reduction of the AhpC active site cysteine residues and for the regeneration of the AhpC enzyme activity. The sequence is that of Alkyl hydroperoxide reductase AhpD from Anaeromyxobacter dehalogenans (strain 2CP-C).